We begin with the raw amino-acid sequence, 95 residues long: UPF0512 protein H (95 aa).

Belongs to the UPF0512 family.

This Dictyostelium discoideum (Social amoeba) protein is UPF0512 protein H.